The chain runs to 472 residues: Regulator of G-protein signaling 6 (472 aa).

Residues 40–115 (KTGGVPIRTV…DDGTFYRFQA (76 aa)) form the DEP domain. Residues 261 to 330 (IRKQITFLNA…MSKEPSQQRV (70 aa)) form the G protein gamma domain. The RGS domain maps to 336–441 (SFDEILKDQV…LMKSDSYARF (106 aa)).

Interacts with GNB5. Interacts with RGS7BP, leading to regulate the subcellular location of the heterodimer formed with GNB5. Interacts with GNAI1.

Its subcellular location is the cytoplasm. It localises to the cytosol. The protein resides in the membrane. It is found in the nucleus. The protein localises to the cell membrane. Its function is as follows. Regulates G protein-coupled receptor signaling cascades. Inhibits signal transduction by increasing the GTPase activity of G protein alpha subunits, thereby driving them into their inactive GDP-bound form. The RGS6/GNB5 dimer enhances GNAO1 GTPase activity. The chain is Regulator of G-protein signaling 6 (RGS6) from Homo sapiens (Human).